Reading from the N-terminus, the 245-residue chain is rRNA adenine N-6-methyltransferase (245 aa).

S-adenosyl-L-methionine contacts are provided by Asn-10, Leu-12, Gly-37, Glu-58, Asp-83, and Ser-100.

This sequence belongs to the class I-like SAM-binding methyltransferase superfamily. rRNA adenine N(6)-methyltransferase family.

The enzyme catalyses adenosine(2085) in 23S rRNA + 2 S-adenosyl-L-methionine = N(6)-dimethyladenosine(2085) in 23S rRNA + 2 S-adenosyl-L-homocysteine + 2 H(+). Functionally, this protein produces a dimethylation of the adenine residue at position 2085 in 23S rRNA, resulting in reduced affinity between ribosomes and macrolide-lincosamide-streptogramin B antibiotics. This is rRNA adenine N-6-methyltransferase from Streptococcus sanguinis.